The following is a 147-amino-acid chain: Acidic phospholipase A2 beta-bungarotoxin A3 chain (147 aa).

A signal peptide spans M1 to A19. The propeptide occupies A20–L27. Intrachain disulfides connect C54–C146, C56–C72, C71–C127, C78–C120, C88–C113, and C106–C118. Ca(2+) contacts are provided by Y55, G57, and G59. Residue H75 is part of the active site. D76 contributes to the Ca(2+) binding site. The active site involves D121.

It belongs to the phospholipase A2 family. Group I subfamily. D49 sub-subfamily. Heterodimer; disulfide-linked. The A chains have phospholipase A2 activity and the B chains show homology with the basic protease inhibitors. The A3 chain is found in beta-5 bungarotoxins. It depends on Ca(2+) as a cofactor. In terms of tissue distribution, expressed by the venom gland.

Its subcellular location is the secreted. The enzyme catalyses a 1,2-diacyl-sn-glycero-3-phosphocholine + H2O = a 1-acyl-sn-glycero-3-phosphocholine + a fatty acid + H(+). Its function is as follows. Snake venom phospholipase A2 (PLA2) that inhibits neuromuscular transmission by blocking acetylcholine release from the nerve termini. PLA2 catalyzes the calcium-dependent hydrolysis of the 2-acyl groups in 3-sn-phosphoglycerides. The protein is Acidic phospholipase A2 beta-bungarotoxin A3 chain of Bungarus multicinctus (Many-banded krait).